The sequence spans 364 residues: MEEIGHHFGLGATAHGQHHSQLPWGSSPLSAVISPPPQQQQQHQQQSAGYLAHSPLSLNTAPPGVSHGGGSGCSNPVLQLANGSLLEACAKAAKEPSSSSYAADVEAIKAKIISHPHYSSLLAAYLDCQKVGAPPEVSARLTAVAQDLELRQRTALGGLGTATEPELDQFMEAYHEMLVKYREELTRPLQEAMEFLRRVETQLNSLSISGRSLRNILSTGSSEEDQEGSGGETELPEIDAHGVDQELKHHLLKKYSGYLSSLKQELSKKKKKGKLPKEARQQLLSWWEMHYKWPYPSESQKVALAESTGLDLKQINNWFINQRKRHWKPTDEMQFVMMDAYHPPNAAFYMDGHFVNDSGLYRFG.

Positions 13 to 49 are disordered; sequence TAHGQHHSQLPWGSSPLSAVISPPPQQQQQHQQQSAG. The span at 19-29 shows a compositional bias: polar residues; it reads HSQLPWGSSPL. One can recognise an ELK domain in the interval 246–266; it reads ELKHHLLKKYSGYLSSLKQEL. Residues 267–330 constitute a DNA-binding region (homeobox; TALE-type); the sequence is SKKKKKGKLP…NQRKRHWKPT (64 aa).

This sequence belongs to the TALE/KNOX homeobox family. As to quaternary structure, binds DNA as a monomer. As to expression, the unit of inflorescence is the spikelet, which bears a fertile tract, the lemma, and the floret consisting of palea, two lodicules, three stamens and the pistil. The lemma is completed by the awn, an appendage homologous to the laminae of normal leaves. Expressed in the inflorescences and lemmas and at lower levels, in palea and vascular bundles.

The protein localises to the nucleus. Functionally, may play a role in meristem formation and/or maintenance. Overexpression causes the hooded phenotype characterized by the appearance of an extra flower of inverse polarity on the lemma. Binds to the DNA sequence 5'-TGAC-3'. The protein is Homeobox protein KNOX3 (KNOX3) of Hordeum vulgare (Barley).